The following is a 389-amino-acid chain: Large ribosomal subunit protein uL3 (389 aa).

Positions 1 to 36 (MSHRKFEHPRHGSLGFLPRKRSSRHRGKVKSFPKDD) are disordered. The span at 18-31 (PRKRSSRHRGKVKS) shows a compositional bias: basic residues.

It belongs to the universal ribosomal protein uL3 family.

It is found in the cytoplasm. In terms of biological role, the L3 protein is a component of the large subunit of cytoplasmic ribosomes. The chain is Large ribosomal subunit protein uL3 (RPL3) from Oryza sativa subsp. japonica (Rice).